The following is a 156-amino-acid chain: ATP synthase subunit b (156 aa).

A helical transmembrane segment spans residues 7–27; sequence LFVQAIVFLILVLFTMKFVWP.

This sequence belongs to the ATPase B chain family. F-type ATPases have 2 components, F(1) - the catalytic core - and F(0) - the membrane proton channel. F(1) has five subunits: alpha(3), beta(3), gamma(1), delta(1), epsilon(1). F(0) has three main subunits: a(1), b(2) and c(10-14). The alpha and beta chains form an alternating ring which encloses part of the gamma chain. F(1) is attached to F(0) by a central stalk formed by the gamma and epsilon chains, while a peripheral stalk is formed by the delta and b chains.

The protein localises to the cell inner membrane. In terms of biological role, f(1)F(0) ATP synthase produces ATP from ADP in the presence of a proton or sodium gradient. F-type ATPases consist of two structural domains, F(1) containing the extramembraneous catalytic core and F(0) containing the membrane proton channel, linked together by a central stalk and a peripheral stalk. During catalysis, ATP synthesis in the catalytic domain of F(1) is coupled via a rotary mechanism of the central stalk subunits to proton translocation. Its function is as follows. Component of the F(0) channel, it forms part of the peripheral stalk, linking F(1) to F(0). The chain is ATP synthase subunit b from Acidovorax sp. (strain JS42).